The following is a 161-amino-acid chain: Phosphopantetheine adenylyltransferase (161 aa).

S8 is a binding site for substrate. ATP is bound by residues 8 to 9 and H16; that span reads SF. Residues 36–40, L72, and R86 each bind substrate; that span reads ENPRK. ATP contacts are provided by residues 87 to 89, E97, and 122 to 128; these read GLR and FSFISSS. E132 provides a ligand contact to substrate.

The protein belongs to the bacterial CoaD family. As to quaternary structure, homohexamer. Mg(2+) serves as cofactor.

The protein localises to the cytoplasm. It catalyses the reaction (R)-4'-phosphopantetheine + ATP + H(+) = 3'-dephospho-CoA + diphosphate. Its pathway is cofactor biosynthesis; coenzyme A biosynthesis; CoA from (R)-pantothenate: step 4/5. Functionally, reversibly transfers an adenylyl group from ATP to 4'-phosphopantetheine, yielding dephospho-CoA (dPCoA) and pyrophosphate. The chain is Phosphopantetheine adenylyltransferase from Thermotoga maritima (strain ATCC 43589 / DSM 3109 / JCM 10099 / NBRC 100826 / MSB8).